A 242-amino-acid chain; its full sequence is Large ribosomal subunit protein uL1 (242 aa).

Belongs to the universal ribosomal protein uL1 family. In terms of assembly, part of the 50S ribosomal subunit.

Functionally, binds directly to 23S rRNA. The L1 stalk is quite mobile in the ribosome, and is involved in E site tRNA release. Its function is as follows. Protein L1 is also a translational repressor protein, it controls the translation of the L11 operon by binding to its mRNA. The chain is Large ribosomal subunit protein uL1 from Wigglesworthia glossinidia brevipalpis.